Reading from the N-terminus, the 1380-residue chain is DNA-directed RNA polymerase subunit beta (1380 aa).

Belongs to the RNA polymerase beta chain family. The RNAP catalytic core consists of 2 alpha, 1 beta, 1 beta' and 1 omega subunit. When a sigma factor is associated with the core the holoenzyme is formed, which can initiate transcription.

The enzyme catalyses RNA(n) + a ribonucleoside 5'-triphosphate = RNA(n+1) + diphosphate. Its function is as follows. DNA-dependent RNA polymerase catalyzes the transcription of DNA into RNA using the four ribonucleoside triphosphates as substrates. The chain is DNA-directed RNA polymerase subunit beta from Nitrobacter winogradskyi (strain ATCC 25391 / DSM 10237 / CIP 104748 / NCIMB 11846 / Nb-255).